Here is a 231-residue protein sequence, read N- to C-terminus: uncharacterized protein (231 aa).

This is an uncharacterized protein from Mycobacterium tuberculosis (strain ATCC 25618 / H37Rv).